Consider the following 148-residue polypeptide: NTR domain-containing protein (148 aa).

Positions 1–26 (MVCRFSYVQVVLILVVLSVIISWANA) are cleaved as a signal peptide. 3 cysteine pairs are disulfide-bonded: C27/C96, C29/C122, and C40/C146. An NTR domain is found at 27–146 (CSCFPPDETR…LQLFNDPQWC (120 aa)).

In terms of tissue distribution, prismatic layer of shell (at protein level). Expressed primarily in the mantle with highest level in the mantle edge and lower level in the mantle pallium.

The protein localises to the secreted. The protein is NTR domain-containing protein of Margaritifera margaritifera (Freshwater pearl mussel).